The primary structure comprises 965 residues: Isoleucine--tRNA ligase (965 aa).

The 'HIGH' region motif lies at Pro68 to His78. Glu582 is a binding site for L-isoleucyl-5'-AMP. A 'KMSKS' region motif is present at residues Lys623 to Ser627. Position 626 (Lys626) interacts with ATP. Positions 936, 939, 956, and 959 each coordinate Zn(2+).

This sequence belongs to the class-I aminoacyl-tRNA synthetase family. IleS type 1 subfamily. Monomer. Zn(2+) serves as cofactor.

The protein localises to the cytoplasm. It catalyses the reaction tRNA(Ile) + L-isoleucine + ATP = L-isoleucyl-tRNA(Ile) + AMP + diphosphate. Functionally, catalyzes the attachment of isoleucine to tRNA(Ile). As IleRS can inadvertently accommodate and process structurally similar amino acids such as valine, to avoid such errors it has two additional distinct tRNA(Ile)-dependent editing activities. One activity is designated as 'pretransfer' editing and involves the hydrolysis of activated Val-AMP. The other activity is designated 'posttransfer' editing and involves deacylation of mischarged Val-tRNA(Ile). This Prochlorococcus marinus subsp. pastoris (strain CCMP1986 / NIES-2087 / MED4) protein is Isoleucine--tRNA ligase.